The sequence spans 768 residues: DNA ligase (768 aa).

Residues 61–65 (DAEFD), 110–111 (SL), and Glu146 each bind NAD(+). Lys148 functions as the N6-AMP-lysine intermediate in the catalytic mechanism. The NAD(+) site is built by Arg169, Glu206, Lys322, and Lys346. Zn(2+) contacts are provided by Cys443, Cys446, Cys462, and Cys468. One can recognise a BRCT domain in the interval 661 to 750 (SVPRTLEGLT…PAQTGTEAEA (90 aa)). The disordered stretch occupies residues 739–768 (NGPAQTGTEAEAATDEATVVDETAAEAATE). The span at 746-768 (TEAEAATDEATVVDETAAEAATE) shows a compositional bias: low complexity.

The protein belongs to the NAD-dependent DNA ligase family. LigA subfamily. Mg(2+) serves as cofactor. Mn(2+) is required as a cofactor.

It carries out the reaction NAD(+) + (deoxyribonucleotide)n-3'-hydroxyl + 5'-phospho-(deoxyribonucleotide)m = (deoxyribonucleotide)n+m + AMP + beta-nicotinamide D-nucleotide.. In terms of biological role, DNA ligase that catalyzes the formation of phosphodiester linkages between 5'-phosphoryl and 3'-hydroxyl groups in double-stranded DNA using NAD as a coenzyme and as the energy source for the reaction. It is essential for DNA replication and repair of damaged DNA. In Paenarthrobacter aurescens (strain TC1), this protein is DNA ligase.